We begin with the raw amino-acid sequence, 175 residues long: Adenine phosphoribosyltransferase (175 aa).

The protein belongs to the purine/pyrimidine phosphoribosyltransferase family. As to quaternary structure, homodimer.

It localises to the cytoplasm. The enzyme catalyses AMP + diphosphate = 5-phospho-alpha-D-ribose 1-diphosphate + adenine. Its pathway is purine metabolism; AMP biosynthesis via salvage pathway; AMP from adenine: step 1/1. Functionally, catalyzes a salvage reaction resulting in the formation of AMP, that is energically less costly than de novo synthesis. This is Adenine phosphoribosyltransferase from Caldicellulosiruptor saccharolyticus (strain ATCC 43494 / DSM 8903 / Tp8T 6331).